Reading from the N-terminus, the 168-residue chain is Group IIF secretory phospholipase A2 (168 aa).

Positions M1–G20 are cleaved as a signal peptide. 7 cysteine pairs are disulfide-bonded: C46/C138, C48/C64, C63/C120, C69/C145, C70/C113, C79/C106, and C98/C111. Ca(2+) contacts are provided by Y47, G49, and G51. H67 is a catalytic residue. A Ca(2+)-binding site is contributed by D68. N-linked (GlcNAc...) asparagine glycans are attached at residues N92 and N102. Residue D114 is part of the active site. Residues N123 and N144 are each glycosylated (N-linked (GlcNAc...) asparagine). The segment at Q139–P168 is required for localization on the plasma membrane.

This sequence belongs to the phospholipase A2 family. Ca(2+) is required as a cofactor. In terms of tissue distribution, expressed at high levels in placenta, testis, thymus and at lower levels in heart, kidney, liver and prostate. Highly expressed in rheumatoid arthritic tissues, including synovial lining cells in the intima, capillary endothelial cells and plasma cells.

The protein localises to the secreted. It is found in the cell membrane. The catalysed reaction is a 1,2-diacyl-sn-glycero-3-phosphocholine + H2O = a 1-acyl-sn-glycero-3-phosphocholine + a fatty acid + H(+). The enzyme catalyses 1-hexadecanoyl-2-(9Z-octadecenoyl)-sn-glycero-3-phospho-(1'-sn-glycerol) + H2O = 1-hexadecanoyl-sn-glycero-3-phospho-(1'-sn-glycerol) + (9Z)-octadecenoate + H(+). It carries out the reaction 1-hexadecanoyl-2-(9Z,12Z-octadecadienoyl)-sn-glycero-3-phosphoethanolamine + H2O = 1-hexadecanoyl-sn-glycero-3-phosphoethanolamine + (9Z,12Z)-octadecadienoate + H(+). It catalyses the reaction 1-hexadecanoyl-2-(5Z,8Z,11Z,14Z-eicosatetraenoyl)-sn-glycero-3-phosphoethanolamine + H2O = 1-hexadecanoyl-sn-glycero-3-phosphoethanolamine + (5Z,8Z,11Z,14Z)-eicosatetraenoate + H(+). The catalysed reaction is 1-hexadecanoyl-2-(9Z-octadecenoyl)-sn-glycero-3-phosphocholine + H2O = 1-hexadecanoyl-sn-glycero-3-phosphocholine + (9Z)-octadecenoate + H(+). The enzyme catalyses 1-hexadecanoyl-2-(9Z-octadecenoyl)-sn-glycero-3-phospho-L-serine + H2O = 1-hexadecanoyl-sn-glycero-3-phospho-L-serine + (9Z)-octadecenoate + H(+). Secretory calcium-dependent phospholipase A2 that primarily targets extracellular phospholipids. Hydrolyzes the ester bond of the fatty acyl group attached at the sn-2 position of phospholipids (phospholipase A2 activity), the catalytic efficiency decreasing in the following order: phosphatidylglycerols &gt; phosphatidylethanolamines &gt; phosphatidylcholines &gt; phosphatidylserines. May play a role in lipid mediator production in inflammatory conditions, by providing arachidonic acid to downstream cyclooxygenases and lipoxygenases. This Homo sapiens (Human) protein is Group IIF secretory phospholipase A2 (PLA2G2F).